Here is a 695-residue protein sequence, read N- to C-terminus: MSDLSHYRNIGIFAHVDAGKTTTTERILKLTGKIHKTGEVHDGESTTDFMEQEAERGITIQSAATTCFWKDHRMNIIDTPGHVDFTVEVYRSLKVLDGGIGVFCGSGGVEPQSETNWRYANESGVARCIFVNKLDRMGADFYRVVGQVKKVLAANPLVMTLPIGIEDEFKGVVNLLDMKAYIWDDTGLPENYEVVDIPEDMVEKANEYREQLIETAVEQDDDLMMAYMDGEEPSLEDIKRCIRKGTRDLAFFPTYCGSAFKNKGIQLVLDAVIDFLPSPTEVDPQPLTDEETGEPTGEVATVSTDEPFRALAFKIMDDRFGALTFIRIYSGVLNKGDTILNSATGKTERIGRMVEMHADERTELTSAQAGDILAVVGMKNVQTGHTLCDPKNACTLEPMIFPEPVISIAVKPKDKGANEKMSIAIGKLVAEDPSFQVETDEDSGETILKGMGELHLDIKVDILKRTYGVELEVGQPQVAYRETITLPVEDSYTHKKQSGGSGQFGKIDYRIKPGETNSGFKFTSTVVGGNVPKEFFPAIEKGFAGMMEVGPLAGYPVLDVEVELYDGGFHAVDSSAIAFEIAAKGAFRQSMPKAGPQILEPVMKVDVFSPEDNVGDVIGDLNRRRGMIKDQEAGATGVRIKADVPLSEMFGYIGHLRTITSGRGQFSMEFSHYSACPQNVADKVIEEAKARKAAK.

Positions 5-280 (SHYRNIGIFA…AVIDFLPSPT (276 aa)) constitute a tr-type G domain. GTP contacts are provided by residues 14-21 (AHVDAGKT), 78-82 (DTPGH), and 132-135 (NKLD). Positions 279 to 299 (PTEVDPQPLTDEETGEPTGEV) are disordered.

This sequence belongs to the TRAFAC class translation factor GTPase superfamily. Classic translation factor GTPase family. EF-G/EF-2 subfamily.

The protein resides in the cytoplasm. Catalyzes the GTP-dependent ribosomal translocation step during translation elongation. During this step, the ribosome changes from the pre-translocational (PRE) to the post-translocational (POST) state as the newly formed A-site-bound peptidyl-tRNA and P-site-bound deacylated tRNA move to the P and E sites, respectively. Catalyzes the coordinated movement of the two tRNA molecules, the mRNA and conformational changes in the ribosome. The polypeptide is Elongation factor G (Alteromonas mediterranea (strain DSM 17117 / CIP 110805 / LMG 28347 / Deep ecotype)).